The sequence spans 309 residues: Ribosomal RNA small subunit methyltransferase H (309 aa).

S-adenosyl-L-methionine contacts are provided by residues 36–38 (GGH), D56, F82, D103, and Q110.

Belongs to the methyltransferase superfamily. RsmH family.

It is found in the cytoplasm. The catalysed reaction is cytidine(1402) in 16S rRNA + S-adenosyl-L-methionine = N(4)-methylcytidine(1402) in 16S rRNA + S-adenosyl-L-homocysteine + H(+). Functionally, specifically methylates the N4 position of cytidine in position 1402 (C1402) of 16S rRNA. The protein is Ribosomal RNA small subunit methyltransferase H of Hahella chejuensis (strain KCTC 2396).